The following is a 345-amino-acid chain: MKLTILFGGASFEHEISIVSAITLKEKLSNFELNFIFCDQDHTFYLINASKMRATTFSRGEYKKMPKLTLSHGSFVQKSLFGSVDISGTVLNLIHGGDGEDGTIAAILDFFSIKYIGPRVDASVFSYDKRYTKWLCHARGVKCVESQELSSSEHSNIKIAYPIIVKPSRLGSSIGVSIVKDESKLDYALDSAFEFDNTVIVEPFLEGVKEYNLAGFSAGKKFYFSIIEEPQKEEFLDFEKKYMDFSRSGNVDSAEISKELESKLRASFEKVYKNLFEGALIRCDFFVVNGEVFLNEINPIPGSMANYLFDDFGGSLKLLANSLPHTKRAKVTYEYIHSISKAKGK.

An ATP-grasp domain is found at 133–332 (KWLCHARGVK…LPHTKRAKVT (200 aa)). 160–211 (AYPIIVKPSRLGSSIGVSIVKDESKLDYALDSAFEFDNTVIVEPFLEGVKEY) lines the ATP pocket. Residues aspartate 284, glutamate 296, and asparagine 298 each contribute to the Mg(2+) site.

The protein belongs to the D-alanine--D-alanine ligase family. The cofactor is Mg(2+). Mn(2+) is required as a cofactor.

The protein localises to the cytoplasm. It catalyses the reaction 2 D-alanine + ATP = D-alanyl-D-alanine + ADP + phosphate + H(+). It functions in the pathway cell wall biogenesis; peptidoglycan biosynthesis. In terms of biological role, cell wall formation. This Sulfurimonas denitrificans (strain ATCC 33889 / DSM 1251) (Thiomicrospira denitrificans (strain ATCC 33889 / DSM 1251)) protein is D-alanine--D-alanine ligase.